The primary structure comprises 250 residues: Ubiquinone/menaquinone biosynthesis C-methyltransferase UbiE (250 aa).

S-adenosyl-L-methionine contacts are provided by residues threonine 73, aspartate 94, 122-123, and serine 139; that span reads NA.

It belongs to the class I-like SAM-binding methyltransferase superfamily. MenG/UbiE family.

It catalyses the reaction a 2-demethylmenaquinol + S-adenosyl-L-methionine = a menaquinol + S-adenosyl-L-homocysteine + H(+). The enzyme catalyses a 2-methoxy-6-(all-trans-polyprenyl)benzene-1,4-diol + S-adenosyl-L-methionine = a 5-methoxy-2-methyl-3-(all-trans-polyprenyl)benzene-1,4-diol + S-adenosyl-L-homocysteine + H(+). It functions in the pathway quinol/quinone metabolism; menaquinone biosynthesis; menaquinol from 1,4-dihydroxy-2-naphthoate: step 2/2. The protein operates within cofactor biosynthesis; ubiquinone biosynthesis. Functionally, methyltransferase required for the conversion of demethylmenaquinol (DMKH2) to menaquinol (MKH2) and the conversion of 2-polyprenyl-6-methoxy-1,4-benzoquinol (DDMQH2) to 2-polyprenyl-3-methyl-6-methoxy-1,4-benzoquinol (DMQH2). This is Ubiquinone/menaquinone biosynthesis C-methyltransferase UbiE from Francisella tularensis subsp. tularensis (strain FSC 198).